We begin with the raw amino-acid sequence, 201 residues long: Small ribosomal subunit protein uS4c (201 aa).

The disordered stretch occupies residues L15–Y44. Residues M89–Q149 form the S4 RNA-binding domain.

The protein belongs to the universal ribosomal protein uS4 family. Part of the 30S ribosomal subunit. Contacts protein S5. The interaction surface between S4 and S5 is involved in control of translational fidelity.

It is found in the plastid. The protein localises to the chloroplast. One of the primary rRNA binding proteins, it binds directly to 16S rRNA where it nucleates assembly of the body of the 30S subunit. Functionally, with S5 and S12 plays an important role in translational accuracy. The sequence is that of Small ribosomal subunit protein uS4c (rps4) from Helianthus annuus (Common sunflower).